We begin with the raw amino-acid sequence, 367 residues long: Small ribosomal subunit biogenesis GTPase RsgA (367 aa).

The CP-type G domain occupies 112 to 267 (AEQVLATNVD…VIDTPGLREL (156 aa)). Residues 157–160 (NKSD) and 209–217 (GSSGAGKST) contribute to the GTP site. Zn(2+)-binding residues include Cys-291, Cys-296, His-298, and Cys-304.

This sequence belongs to the TRAFAC class YlqF/YawG GTPase family. RsgA subfamily. In terms of assembly, monomer. Associates with 30S ribosomal subunit, binds 16S rRNA. Requires Zn(2+) as cofactor.

It is found in the cytoplasm. Its function is as follows. One of several proteins that assist in the late maturation steps of the functional core of the 30S ribosomal subunit. Helps release RbfA from mature subunits. May play a role in the assembly of ribosomal proteins into the subunit. Circularly permuted GTPase that catalyzes slow GTP hydrolysis, GTPase activity is stimulated by the 30S ribosomal subunit. In Opitutus terrae (strain DSM 11246 / JCM 15787 / PB90-1), this protein is Small ribosomal subunit biogenesis GTPase RsgA.